The following is a 199-amino-acid chain: Protein-L-isoaspartate O-methyltransferase (199 aa).

The active site involves Ser-51.

The protein belongs to the methyltransferase superfamily. L-isoaspartyl/D-aspartyl protein methyltransferase family.

It localises to the cytoplasm. It catalyses the reaction [protein]-L-isoaspartate + S-adenosyl-L-methionine = [protein]-L-isoaspartate alpha-methyl ester + S-adenosyl-L-homocysteine. In terms of biological role, catalyzes the methyl esterification of L-isoaspartyl residues in peptides and proteins that result from spontaneous decomposition of normal L-aspartyl and L-asparaginyl residues. It plays a role in the repair and/or degradation of damaged proteins. The protein is Protein-L-isoaspartate O-methyltransferase of Fervidobacterium nodosum (strain ATCC 35602 / DSM 5306 / Rt17-B1).